Reading from the N-terminus, the 422-residue chain is tRNA hydroxylation protein P (422 aa).

An N-terminal signal peptide occupies residues 1-58 (MNQVELLSPAGNLKKLKIALNYGADAVYGGVSHFSLRNRAGKEFTLETFKEGIDYAHA).

This sequence belongs to the peptidase U32 family.

In terms of biological role, involved in prephenate-dependent formation of 5-hydroxyuridine (ho5U) modification at position 34 in tRNAs, the first step in 5-carboxymethoxyuridine (cmo5U) biosynthesis. This chain is tRNA hydroxylation protein P, found in Helicobacter pylori (strain J99 / ATCC 700824) (Campylobacter pylori J99).